Consider the following 165-residue polypeptide: Pyruvoyl-dependent arginine decarboxylase 1 (165 aa).

The residue at position 45 (Ser45) is a Pyruvic acid (Ser).

The protein belongs to the PdaD family. It depends on pyruvate as a cofactor.

It carries out the reaction L-arginine + H(+) = agmatine + CO2. The sequence is that of Pyruvoyl-dependent arginine decarboxylase 1 (pdaD1) from Methanosarcina acetivorans (strain ATCC 35395 / DSM 2834 / JCM 12185 / C2A).